Here is a 235-residue protein sequence, read N- to C-terminus: MPKHGKKYRSAIEGRDIAEILTLEDAVAKSLGASFAKFDETVDVAICLGVDPKYSDQMVRGAVTLPHGLGKTVRVAVFCKGDKEAEAKAAGADFAGAEELVAKIKEGWLDFDKAIATPDVMALVGQIGRVLGPRGLMPNAKTGTVTFDVATAVKETKAGRVEFKVDKAGVLHAPLGKVSFGPEKILDNLKSLLDTVNRLKPATAKGTYMKAMAVSTTMGPGFKVDPTTIKKFLEG.

The protein belongs to the universal ribosomal protein uL1 family. In terms of assembly, part of the 50S ribosomal subunit.

In terms of biological role, binds directly to 23S rRNA. The L1 stalk is quite mobile in the ribosome, and is involved in E site tRNA release. Its function is as follows. Protein L1 is also a translational repressor protein, it controls the translation of the L11 operon by binding to its mRNA. This chain is Large ribosomal subunit protein uL1, found in Nitratidesulfovibrio vulgaris (strain DSM 19637 / Miyazaki F) (Desulfovibrio vulgaris).